Reading from the N-terminus, the 129-residue chain is MRITQGCFSFLPDLTDEQITAQVQYCLGKGWAIGVEYTDDPHPRNTYWEMWGNPMFDLKDAKGVMMELEDCRKAHPQDYIRLNAFDSSRGLETVTMSFIVNRPENEPSLRMTRTESNGRSQHYMWETQR.

The interval 109–129 (LRMTRTESNGRSQHYMWETQR) is disordered.

The protein belongs to the RuBisCO small chain family. Heterohexadecamer of 8 large and 8 small subunits.

Its function is as follows. RuBisCO catalyzes two reactions: the carboxylation of D-ribulose 1,5-bisphosphate, the primary event in carbon dioxide fixation, as well as the oxidative fragmentation of the pentose substrate. Both reactions occur simultaneously and in competition at the same active site. Although the small subunit is not catalytic it is essential for maximal activity. This is Ribulose bisphosphate carboxylase small subunit from Rhizobium meliloti (strain 1021) (Ensifer meliloti).